A 431-amino-acid chain; its full sequence is Anaerobic glycerol-3-phosphate dehydrogenase subunit B (431 aa).

Belongs to the anaerobic G-3-P dehydrogenase subunit B family. In terms of assembly, composed of a catalytic GlpA/B dimer and of membrane bound GlpC. The cofactor is FMN.

It catalyses the reaction a quinone + sn-glycerol 3-phosphate = dihydroxyacetone phosphate + a quinol. Its pathway is polyol metabolism; glycerol degradation via glycerol kinase pathway; glycerone phosphate from sn-glycerol 3-phosphate (anaerobic route): step 1/1. In terms of biological role, conversion of glycerol 3-phosphate to dihydroxyacetone. Uses fumarate or nitrate as electron acceptor. This chain is Anaerobic glycerol-3-phosphate dehydrogenase subunit B, found in Mannheimia succiniciproducens (strain KCTC 0769BP / MBEL55E).